The primary structure comprises 435 residues: 3-phosphoshikimate 1-carboxyvinyltransferase (435 aa).

3-phosphoshikimate contacts are provided by Lys15, Ser16, and Arg20. Position 15 (Lys15) interacts with phosphoenolpyruvate. Gly96 and Arg124 together coordinate phosphoenolpyruvate. The 3-phosphoshikimate site is built by Ser169, Gln171, Ser195, Asp318, and Lys345. Residue Gln171 participates in phosphoenolpyruvate binding. Asp318 functions as the Proton acceptor in the catalytic mechanism. Residues Arg349 and Arg393 each contribute to the phosphoenolpyruvate site.

This sequence belongs to the EPSP synthase family. Monomer.

It is found in the cytoplasm. It carries out the reaction 3-phosphoshikimate + phosphoenolpyruvate = 5-O-(1-carboxyvinyl)-3-phosphoshikimate + phosphate. It participates in metabolic intermediate biosynthesis; chorismate biosynthesis; chorismate from D-erythrose 4-phosphate and phosphoenolpyruvate: step 6/7. Functionally, catalyzes the transfer of the enolpyruvyl moiety of phosphoenolpyruvate (PEP) to the 5-hydroxyl of shikimate-3-phosphate (S3P) to produce enolpyruvyl shikimate-3-phosphate and inorganic phosphate. The protein is 3-phosphoshikimate 1-carboxyvinyltransferase of Chlorobium chlorochromatii (strain CaD3).